The sequence spans 595 residues: Acriflavine sensitivity control protein acr-2 (595 aa).

Positions 22–49 (CYNCHRKRLRCDKSLPACLKCSINGEEC) form a DNA-binding region, zn(2)-C6 fungal-type. Low complexity predominate over residues 69–88 (TTRTTNKTNFNGTNTTTPRT). The tract at residues 69-172 (TTRTTNKTNF…PDDNPDPSSQ (104 aa)) is disordered. Positions 89–117 (VKSSTPTQAPTPSDSPRQLDTDVTSSSAP) are enriched in polar residues. Positions 118-138 (SHTCSRSTTTSTTTTRISSPT) are enriched in low complexity.

It localises to the nucleus. Functionally, probable transcriptional regulator. This is Acriflavine sensitivity control protein acr-2 (acr-2) from Neurospora crassa (strain ATCC 24698 / 74-OR23-1A / CBS 708.71 / DSM 1257 / FGSC 987).